Here is a 1196-residue protein sequence, read N- to C-terminus: Probable cation-transporting ATPase 13A4 (1196 aa).

Over 1 to 31 (MGHFEKGQHALLNEGEENEMEIFGYRTQGCR) the chain is Cytoplasmic. An intramembrane segment occupies 32-52 (KSLCLAGSIFSFGILPLVFYW). The Cytoplasmic portion of the chain corresponds to 53–197 (RPAWHVWAHC…DVEVTPIWKL (145 aa)). The chain crosses the membrane as a helical span at residues 198-218 (LIKEVLNPFYIFQLFSVCLWF). Residues 219–223 (SEDYK) are Lumenal-facing. A helical membrane pass occupies residues 224 to 244 (EYAFAIIIMSIISISLTVYDL). Topologically, residues 245–400 (REQSVKLHHL…NFQLYRDAIR (156 aa)) are cytoplasmic. The chain crosses the membrane as a helical span at residues 401 to 421 (FLLCLVGTATIGMIYTLCVYV). Over 422–436 (LSGEPPEEVVRKALD) the chain is Lumenal. A helical membrane pass occupies residues 437–457 (VITIAVPPALPAALTTGIIYA). The Cytoplasmic portion of the chain corresponds to 458 to 900 (QRRLKKRGIF…KEGRAALVTS (443 aa)). Aspartate 486 functions as the 4-aspartylphosphate intermediate in the catalytic mechanism. Mg(2+) contacts are provided by aspartate 848 and aspartate 852. A helical transmembrane segment spans residues 901 to 921 (FCMFKYMALYSMIQYVGVLLL). Residues 922–932 (YWETNSLSNYQ) lie on the Lumenal side of the membrane. The chain crosses the membrane as a helical span at residues 933–953 (FLFQDLAITTLIGVTMNLNGA). Residues 954 to 972 (YPKLVPFRPAGRLISPPLL) lie on the Cytoplasmic side of the membrane. Residues 973–993 (LSVIFNILLSLAMHIAGFILV) traverse the membrane as a helical segment. The Lumenal segment spans residues 994–1035 (QRQPWYSVEIHSACTVQNESISELTMSPTAPEKMESNSTFTS). The helical transmembrane segment at 1036-1056 (FENTTVWFLGTINCITVALVF) threads the bilayer. The Cytoplasmic segment spans residues 1057–1070 (SKGKPFRQPTYTNY). A helical transmembrane segment spans residues 1071 to 1091 (IFVLVLIIQLGVCLFILFADI). Over 1092 to 1109 (PELYRRLDLLCTPVLWRA) the chain is Lumenal. The chain crosses the membrane as a helical span at residues 1110 to 1130 (SIVIMLSLNFIVSLVAEEAVI). The Cytoplasmic segment spans residues 1131–1196 (ENRALWMMIK…PVFESNEEQL (66 aa)).

It belongs to the cation transport ATPase (P-type) (TC 3.A.3) family. Type V subfamily. In terms of tissue distribution, expressed in heart, placenta, liver, skeletal muscles, and pancreas. Lower levels of expression are also detected in brain, lung and kidney. Weakly expressed in the adult brain. Expression in fetal brain is higher than in adult brain, with levels similar to several other fetal tissues including spleen and skeletal muscle. In adult brain expressed at low levels in all tissues examined, including the temporal lobe and putamen. Highly expressed in the respiratory and integumentary systems.

It is found in the early endosome membrane. The protein resides in the late endosome membrane. It localises to the recycling endosome membrane. The catalysed reaction is ATP + H2O = ADP + phosphate + H(+). The polypeptide is Probable cation-transporting ATPase 13A4 (ATP13A4) (Homo sapiens (Human)).